A 128-amino-acid chain; its full sequence is Glycine cleavage system H protein (128 aa).

The region spanning 24-105 (SLTIGVTDHA…AYAAWLFKLK (82 aa)) is the Lipoyl-binding domain. N6-lipoyllysine is present on Lys65.

Belongs to the GcvH family. The glycine cleavage system is composed of four proteins: P, T, L and H. (R)-lipoate serves as cofactor.

Its function is as follows. The glycine cleavage system catalyzes the degradation of glycine. The H protein shuttles the methylamine group of glycine from the P protein to the T protein. In Aromatoleum aromaticum (strain DSM 19018 / LMG 30748 / EbN1) (Azoarcus sp. (strain EbN1)), this protein is Glycine cleavage system H protein.